The following is a 367-amino-acid chain: 3-dehydroquinate synthase (367 aa).

Residues 69–74 (DGEAFK), 103–107 (GVIGD), 127–128 (TT), Lys-140, and Lys-149 contribute to the NAD(+) site. Positions 182, 245, and 262 each coordinate Zn(2+).

Belongs to the sugar phosphate cyclases superfamily. Dehydroquinate synthase family. NAD(+) serves as cofactor. Requires Co(2+) as cofactor. Zn(2+) is required as a cofactor.

The protein resides in the cytoplasm. It catalyses the reaction 7-phospho-2-dehydro-3-deoxy-D-arabino-heptonate = 3-dehydroquinate + phosphate. It functions in the pathway metabolic intermediate biosynthesis; chorismate biosynthesis; chorismate from D-erythrose 4-phosphate and phosphoenolpyruvate: step 2/7. Catalyzes the conversion of 3-deoxy-D-arabino-heptulosonate 7-phosphate (DAHP) to dehydroquinate (DHQ). The protein is 3-dehydroquinate synthase of Pseudomonas syringae pv. tomato (strain ATCC BAA-871 / DC3000).